The following is a 799-amino-acid chain: DISARM protein DrmE (799 aa).

It is found in the cytoplasm. Component of antiviral defense system DISARM (defense island system associated with restriction-modification), composed of DrmE, DrmA, DrmB, DrmC and DrmMII. DISARM is probably a multi-gene restriction module, this subunit has an unknown function. Expression of DISARM in B.subtilis (strain BEST7003) confers resistance to phages Nf, phi29, phi105, phi3T, SPO1, SPR and SPP1. Protection is over 10(7)-fold against phi3T, 10(4)-10(5)-fold against Nf, phi29, phi105 and SPR, 100-fold against SPO1 and 10-fold against SPP1. DISARM does not interfere with phage adsorption, but instead interferes with (phi3T) DNA replication early in its cycle, preventing replication, circularization and lysogeny and probably causes phage DNA degradation (DNA is degraded in SPP1-infected cells). This is DISARM protein DrmE from Bacillus paralicheniformis (strain ATCC 9945a / NCIMB 11709 / CD-2).